A 653-amino-acid polypeptide reads, in one-letter code: MSGSDKTYQLDETTLYSVLNLKYGATEVQIRKAYMKLARELHPDKSKSEEAGELFKKVAHAHFILTDKKEKMKYDSKLLAKGLYDYSPRIPNDKSRQNGMFKDTAKNSKTFTNNNNKDDASADTSKSKPRKSRPYEEQPYGFGVDTGRGSGKNIPLFKTFNAKSYQNSKKSVTPPRPKQPSEKNKRATSFSNENRNSSSVPLAKNQAKKTANSGSAVGSESRISSSGSESSSNVNSATGSSEEPDVHTQHKMARKDSYLSGFQSKARSPESPFQDPAQRHFVRTKYVSSRYDKRSLSPVKTTPNSSTETLNNVKNIFNSMSDRLRHTLFGNSNGDAEDEDQHNTQHDTERLFKRAKLPGRKILTDEEIDEIVKQQNEAESNDPDRQDYGNSFNLNVDNLSVNTQDFNHISEPSPEKEETKANKAPFLEEVYEIKSDNEHLEEKAAVSPDDGIDTLGLNELGETLPNNKEPFDMRNVGDSLDNYQVKRMKVSPKPRSVPSKTTPGSSHAEENLQEPVNIPLPRIYKLDPIPIEKFNVDLSISNIKLPEMPNLLCNVLDKAQVLECQQKTAEFTKQTNETKRKLLHILSQRCSADEELHDKLYRVENVNRMVEAKLYDLELMTKLSELLNRQRMVAENYAIMINTMYASGLLEKN.

In terms of domain architecture, J spans 14–78 (TLYSVLNLKY…KEKMKYDSKL (65 aa)). Disordered stretches follow at residues 85–308 (DYSP…SSTE) and 490–512 (VSPK…EENL). Composition is skewed to polar residues over residues 161–171 (NAKSYQNSKKS) and 187–200 (ATSF…SSSV). Low complexity predominate over residues 213–241 (SGSAVGSESRISSSGSESSSNVNSATGSS). The segment covering 298–308 (PVKTTPNSSTE) has biased composition (polar residues).

It localises to the cytoplasm. The protein localises to the nucleus. In Kluyveromyces lactis (strain ATCC 8585 / CBS 2359 / DSM 70799 / NBRC 1267 / NRRL Y-1140 / WM37) (Yeast), this protein is J protein JJJ2 (JJJ2).